Consider the following 3425-residue polypeptide: Genome polyprotein (3425 aa).

Positions 3 to 16 (NKKPGRPGSGRVVN) are interaction with host EXOC1. Positions 38 to 73 (VLRGAGPIRFVLALLTFFKFTALRPTIGMLKRWKLV) are hydrophobic; homodimerization of capsid protein C. The propeptide at 105 to 120 (GGSCSWIIMLLPIVAG) is ER anchor for the capsid protein C, removed in mature form by serine protease NS3. A helical transmembrane segment spans residues 105-125 (GGSCSWIIMLLPIVAGLKLGN). A glycan (N-linked (GlcNAc...) asparagine; by host) is linked at Asn135. 2 consecutive transmembrane segments (helical) span residues 247–267 (WALR…NLGT) and 273–293 (IIFT…CLGM). 6 disulfides stabilise this stretch: Cys290–Cys317, Cys347–Cys403, Cys361–Cys392, Cys379–Cys408, Cys477–Cys575, and Cys592–Cys623. The interval 385 to 398 (DRGWGNGCGLFGKG) is fusion peptide. Transmembrane regions (helical) follow at residues 740–760 (LFGG…LWMG) and 768–788 (ISMT…NVNA). Cys792 and Cys803 form a disulfide bridge. 3 N-linked (GlcNAc...) asparagine; by host glycosylation sites follow: Asn918, Asn963, and Asn995. 4 disulfides stabilise this stretch: Cys967-Cys1011, Cys1068-Cys1117, Cys1079-Cys1100, and Cys1101-Cys1104. The next 7 helical transmembrane spans lie at 1138-1158 (VMAF…VMIV), 1169-1189 (TAPI…FGGI), 1214-1234 (IVHL…IGFL), 1290-1310 (FALP…IDVV), 1337-1357 (MLLG…FAGL), 1369-1389 (WPVS…GGIA), and 1395-1415 (SMAI…VTGF). An interacts with and activates NS3 protease region spans residues 1421-1460 (LEKASDISWSEEARVTGASQRFDVEIDQDGNMRLLNDPGV). The Peptidase S7 domain occupies 1499 to 1676 (GGVIWDVPAP…EKKEEEVPQV (178 aa)). Residues His1549, Asp1573, and Ser1633 each act as charge relay system; for serine protease NS3 activity in the active site. Residues 1679-1835 (ENMLRKRQLT…DSNSPITDIE (157 aa)) enclose the Helicase ATP-binding domain. The segment at 1683 to 1686 (RKRQ) is important for RNA-binding. 1692-1699 (LHPGSGKT) is a binding site for ATP. Positions 1783–1786 (DEAH) match the DEAH box motif. A Helicase C-terminal domain is found at 1845-2011 (SGYEWITDFQ…GLVAQLYGPE (167 aa)). The segment at 2162 to 2166 (EELPE) is regulates the ATPase activity of NS3 helicase. The next 8 helical transmembrane spans lie at 2169-2189 (ETFL…LFFV), 2194-2214 (LGKT…LWIA), 2216-2236 (VPAQ…IVLI), 2252-2272 (VFMI…MGWL), 2306-2326 (AWAA…HLII), 2334-2354 (LMAM…MPFV), 2371-2391 (FTMT…AFLV), and 2441-2461 (CVLV…LTLT). Residues 2521 to 2786 (GGGTGRTLGE…DVDLGSGTRA (266 aa)) enclose the mRNA cap 0-1 NS5-type MT domain. Ser2576 serves as a coordination point for S-adenosyl-L-methionine. A Phosphoserine modification is found at Ser2576. The active-site For 2'-O-MTase activity is the Lys2581. Residues Gly2606, Trp2607, Thr2624, Lys2625, and Val2652 each contribute to the S-adenosyl-L-methionine site. The For 2'-O-MTase activity role is filled by Asp2666. Ile2667 serves as a coordination point for S-adenosyl-L-methionine. Residues Lys2702 and Glu2738 each act as for 2'-O-MTase activity in the active site. Tyr2740 contributes to the S-adenosyl-L-methionine binding site. 4 residues coordinate Zn(2+): Glu2960, His2964, Cys2969, and Cys2972. The RdRp catalytic domain maps to 3050–3202 (GLMYADDTAG…KPADDRFATA (153 aa)). Zn(2+)-binding residues include His3237, Cys3253, and Cys3372. The PDZ-binding motif lies at 3423–3425 (GVL).

The protein in the N-terminal section; belongs to the class I-like SAM-binding methyltransferase superfamily. mRNA cap 0-1 NS5-type methyltransferase family. Homodimer. In terms of assembly, forms heterodimers with envelope protein E in the endoplasmic reticulum and Golgi. As to quaternary structure, homodimer; in the endoplasmic reticulum and Golgi. Interacts with protein prM. Interacts with non-structural protein 1. Homodimer; Homohexamer when secreted. Interacts with envelope protein E. NS1 interacts with NS4B. Interacts with host MAVS (via C-terminus); this interaction blocks the interaction of MAVS with RIGI or IFIH1/MDA5. In terms of assembly, interacts (via N-terminus) with serine protease NS3. As to quaternary structure, forms a heterodimer with serine protease NS3. May form homooligomers. Forms a heterodimer with NS2B. Interacts with non-structural protein 2A (via N-terminus). Interacts with NS4B. Interacts with unphosphorylated RNA-directed RNA polymerase NS5; this interaction stimulates RNA-directed RNA polymerase NS5 guanylyltransferase activity. In terms of assembly, interacts with serine protease NS3. As to quaternary structure, homodimer. Post-translationally, specific enzymatic cleavages in vivo yield mature proteins. Cleavages in the lumen of endoplasmic reticulum are performed by host signal peptidase, whereas cleavages in the cytoplasmic side are performed by serine protease NS3. Signal cleavage at the 2K-4B site requires a prior NS3 protease-mediated cleavage at the 4A-2K site. Both NS2A and NS2B proteins are required in cis for NS2A/2B proteolytic processing. In terms of processing, cleaved in post-Golgi vesicles by a host furin, releasing the mature small envelope protein M, and peptide pr. This cleavage is incomplete as up to 30% of viral particles still carry uncleaved prM. N-glycosylated. Post-translationally, N-glycosylated. The excreted form is glycosylated and this is required for efficient secretion of the protein from infected cells. In terms of processing, phosphorylated on serines residues. This phosphorylation may trigger NS5 nuclear localization.

The protein localises to the virion. Its subcellular location is the host nucleus. It is found in the host cytoplasm. It localises to the host perinuclear region. The protein resides in the secreted. The protein localises to the virion membrane. Its subcellular location is the host endoplasmic reticulum membrane. It carries out the reaction Selective hydrolysis of -Xaa-Xaa-|-Yaa- bonds in which each of the Xaa can be either Arg or Lys and Yaa can be either Ser or Ala.. The catalysed reaction is RNA(n) + a ribonucleoside 5'-triphosphate = RNA(n+1) + diphosphate. It catalyses the reaction a ribonucleoside 5'-triphosphate + H2O = a ribonucleoside 5'-diphosphate + phosphate + H(+). The enzyme catalyses ATP + H2O = ADP + phosphate + H(+). It carries out the reaction a 5'-end (5'-triphosphoguanosine)-ribonucleoside in mRNA + S-adenosyl-L-methionine = a 5'-end (N(7)-methyl 5'-triphosphoguanosine)-ribonucleoside in mRNA + S-adenosyl-L-homocysteine. The catalysed reaction is a 5'-end (N(7)-methyl 5'-triphosphoguanosine)-ribonucleoside in mRNA + S-adenosyl-L-methionine = a 5'-end (N(7)-methyl 5'-triphosphoguanosine)-(2'-O-methyl-ribonucleoside) in mRNA + S-adenosyl-L-homocysteine + H(+). Functionally, capsid protein self-assembles to form an icosahedral capsid about 40 nm in diameter. Plays a role in virus budding by binding to the cell membrane and gathering the viral RNA into a nucleocapsid that forms the core of a mature virus particle. Prevents premature fusion activity of envelope proteins in trans-Golgi by binding to envelope protein E at pH6.0. After virion release in extracellular space, gets dissociated from E dimers. In terms of biological role, acts as a chaperone for envelope protein E during intracellular virion assembly by masking and inactivating envelope protein E fusion peptide. prM is the only viral peptide matured by host furin in the trans-Golgi network probably to avoid catastrophic activation of the viral fusion activity in acidic Golgi compartment prior to virion release. prM-E cleavage is inefficient, and many virions are only partially matured. These uncleaved prM would play a role in immune evasion. Its function is as follows. May play a role in virus budding. Exerts cytotoxic effects by activating a mitochondrial apoptotic pathway through M ectodomain. May display a viroporin activity. Functionally, binds to host cell surface receptor and mediates fusion between viral and cellular membranes. Envelope protein is synthesized in the endoplasmic reticulum in the form of heterodimer with protein prM. They play a role in virion budding in the ER, and the newly formed immature particle is covered with 60 spikes composed of heterodimer between precursor prM and envelope protein E. The virion is transported to the Golgi apparatus where the low pH causes dissociation of PrM-E heterodimers and formation of E homodimers. Involved in immune evasion, pathogenesis and viral replication. Interacts with host MAVS and blocks MAVS binding to RIGI or IFIH1/MDA5, thereby leading to evasion of the innate immune response. Once cleaved off the polyprotein, is targeted to three destinations: the viral replication cycle, the plasma membrane and the extracellular compartment. Essential for viral replication. Required for formation of the replication complex and recruitment of other non-structural proteins to the ER-derived membrane structures. Excreted as a hexameric lipoparticle that plays a role against host immune response. In terms of biological role, component of the viral RNA replication complex that functions in virion assembly. Its function is as follows. Required cofactor for the serine protease function of NS3. May have membrane-destabilizing activity and form viroporins. Functionally, displays three enzymatic activities: serine protease, NTPase and RNA helicase. NS3 serine protease, in association with NS2B, performs its autocleavage and cleaves the polyprotein at dibasic sites in the cytoplasm: C-prM, NS2A-NS2B, NS2B-NS3, NS3-NS4A, NS4A-2K and NS4B-NS5. NS3 RNA helicase binds RNA and unwinds dsRNA in the 3' to 5' direction. Regulates the ATPase activity of the NS3 helicase activity. NS4A allows NS3 helicase to conserve energy during unwinding. In terms of biological role, functions as a signal peptide for NS4B. Its function is as follows. Induces the formation of ER-derived membrane vesicles where the viral replication takes place. Functionally, replicates the viral (+) and (-) RNA genome, and performs the capping of genomes in the cytoplasm. NS5 methylates viral RNA cap at guanine N-7 and ribose 2'-O positions. The chain is Genome polyprotein from Anas (ducks).